We begin with the raw amino-acid sequence, 237 residues long: Ribonuclease PH (237 aa).

Phosphate-binding positions include Arg86 and 124 to 126 (GTR).

This sequence belongs to the RNase PH family. Homohexameric ring arranged as a trimer of dimers.

It carries out the reaction tRNA(n+1) + phosphate = tRNA(n) + a ribonucleoside 5'-diphosphate. Its function is as follows. Phosphorolytic 3'-5' exoribonuclease that plays an important role in tRNA 3'-end maturation. Removes nucleotide residues following the 3'-CCA terminus of tRNAs; can also add nucleotides to the ends of RNA molecules by using nucleoside diphosphates as substrates, but this may not be physiologically important. Probably plays a role in initiation of 16S rRNA degradation (leading to ribosome degradation) during starvation. The sequence is that of Ribonuclease PH from Bradyrhizobium sp. (strain BTAi1 / ATCC BAA-1182).